The primary structure comprises 109 residues: Nucleoid-associated protein BCB4264_A0025 (109 aa).

Belongs to the YbaB/EbfC family. In terms of assembly, homodimer.

It is found in the cytoplasm. The protein resides in the nucleoid. In terms of biological role, binds to DNA and alters its conformation. May be involved in regulation of gene expression, nucleoid organization and DNA protection. This is Nucleoid-associated protein BCB4264_A0025 from Bacillus cereus (strain B4264).